We begin with the raw amino-acid sequence, 387 residues long: Putative F-box protein At1g47800 (387 aa).

Residues 8–54 (LQSLDHIPIDVLFEILVKLPAKSVARFLCVSKVWATMIRGEVFIRSF) enclose the F-box domain.

The chain is Putative F-box protein At1g47800 from Arabidopsis thaliana (Mouse-ear cress).